Reading from the N-terminus, the 466-residue chain is Asparagine--tRNA ligase (466 aa).

The protein belongs to the class-II aminoacyl-tRNA synthetase family. As to quaternary structure, homodimer.

Its subcellular location is the cytoplasm. The catalysed reaction is tRNA(Asn) + L-asparagine + ATP = L-asparaginyl-tRNA(Asn) + AMP + diphosphate + H(+). This chain is Asparagine--tRNA ligase, found in Yersinia enterocolitica serotype O:8 / biotype 1B (strain NCTC 13174 / 8081).